Here is an 823-residue protein sequence, read N- to C-terminus: Apoptosis-resistant E3 ubiquitin protein ligase 1 (823 aa).

One copy of the Filamin repeat lies at W64–F158. The disordered stretch occupies residues P315–E345. Residues S483–T789 form an interaction with SOCS2 region. Positions S483–L823 constitute an HECT domain. C790 functions as the Glycyl thioester intermediate in the catalytic mechanism.

Interacts with SOCS2. Interacts (via HECT domain) with HTRA2, DIABLO/SMAC and SEPTIN4; in the cytoplasm following induction of apoptosis. In terms of processing, autoubiquitinated in vitro in the presence of E2 enzyme UBE2D1/UBCH5A. Detected in brain, testis, heart, liver, lung and kidney with very low levels in skeletal muscle and spleen.

It catalyses the reaction S-ubiquitinyl-[E2 ubiquitin-conjugating enzyme]-L-cysteine + [acceptor protein]-L-lysine = [E2 ubiquitin-conjugating enzyme]-L-cysteine + N(6)-ubiquitinyl-[acceptor protein]-L-lysine.. Its pathway is protein modification; protein ubiquitination. E3 ubiquitin-protein ligase that catalyzes 'Lys-11'- or 'Lys-33'-linked polyubiquitin chains, with some preference for 'Lys-33' linkages. E3 ubiquitin-protein ligases accept ubiquitin from an E2 ubiquitin-conjugating enzyme in the form of a thioester and then directly transfers the ubiquitin to targeted substrates. Ubiquitinates SEPTIN4, DIABLO/SMAC and HTRA2 in vitro. Modulates pulmonary inflammation by targeting SOCS2 for ubiquitination and subsequent degradation by the proteasome. The chain is Apoptosis-resistant E3 ubiquitin protein ligase 1 (Arel1) from Mus musculus (Mouse).